The chain runs to 427 residues: Histidine--tRNA ligase (427 aa).

The protein belongs to the class-II aminoacyl-tRNA synthetase family. Homodimer.

Its subcellular location is the cytoplasm. The enzyme catalyses tRNA(His) + L-histidine + ATP = L-histidyl-tRNA(His) + AMP + diphosphate + H(+). This chain is Histidine--tRNA ligase, found in Proteus mirabilis (strain HI4320).